The primary structure comprises 848 residues: Translation initiation factor IF-2 (848 aa).

The disordered stretch occupies residues 1 to 265; it reads MSDTDGKKPL…GNQRAEKQVR (265 aa). Over residues 89–162 the composition is skewed to basic and acidic residues; it reads KAREVEEAAQ…AEIAKPKTEA (74 aa). Residues 163–179 are compositionally biased toward low complexity; it reads RPATPADRAAAEAAAVR. Basic and acidic residues predominate over residues 191-219; that stretch reads RKTDRDRDTRGGGGDDRDSRNKGRDDSRR. The tr-type G domain occupies 346–514; it reads PRAPIITIMG…AIALQAEILE (169 aa). Residues 355 to 362 form a G1 region; sequence GHVDHGKT. 355-362 is a GTP binding site; that stretch reads GHVDHGKT. The G2 stretch occupies residues 380 to 384; the sequence is GITQH. Positions 402 to 405 are G3; it reads DTPG. GTP-binding positions include 402–406 and 456–459; these read DTPGH and NKID. The segment at 456–459 is G4; it reads NKID. The G5 stretch occupies residues 492–494; sequence SAK.

The protein belongs to the TRAFAC class translation factor GTPase superfamily. Classic translation factor GTPase family. IF-2 subfamily.

It localises to the cytoplasm. Its function is as follows. One of the essential components for the initiation of protein synthesis. Protects formylmethionyl-tRNA from spontaneous hydrolysis and promotes its binding to the 30S ribosomal subunits. Also involved in the hydrolysis of GTP during the formation of the 70S ribosomal complex. This Paracoccus denitrificans (strain Pd 1222) protein is Translation initiation factor IF-2.